Reading from the N-terminus, the 81-residue chain is Large ribosomal subunit protein bL27 (81 aa).

The span at 1 to 11 shows a compositional bias: polar residues; it reads MATSKSGGSSK. The tract at residues 1-24 is disordered; it reads MATSKSGGSSKNGRDSISKRLGVK.

Belongs to the bacterial ribosomal protein bL27 family.

This chain is Large ribosomal subunit protein bL27, found in Borrelia duttonii (strain Ly).